Consider the following 443-residue polypeptide: ATP-dependent protease ATPase subunit HslU (443 aa).

Residues I18, 60-65, D256, E321, and R393 each bind ATP; that span reads GVGKTE.

It belongs to the ClpX chaperone family. HslU subfamily. A double ring-shaped homohexamer of HslV is capped on each side by a ring-shaped HslU homohexamer. The assembly of the HslU/HslV complex is dependent on binding of ATP.

The protein resides in the cytoplasm. In terms of biological role, ATPase subunit of a proteasome-like degradation complex; this subunit has chaperone activity. The binding of ATP and its subsequent hydrolysis by HslU are essential for unfolding of protein substrates subsequently hydrolyzed by HslV. HslU recognizes the N-terminal part of its protein substrates and unfolds these before they are guided to HslV for hydrolysis. The sequence is that of ATP-dependent protease ATPase subunit HslU from Pectobacterium carotovorum subsp. carotovorum (strain PC1).